Consider the following 493-residue polypeptide: Angiopoietin-related protein 2 (493 aa).

Residues 1-19 (MRPLCMTYWWLGLLATVGA) form the signal peptide. Coiled coils occupy residues 77 to 115 (EVHL…VDGG) and 152 to 202 (ALEL…QLEE). N-linked (GlcNAc...) asparagine glycans are attached at residues Asn-164 and Asn-192. The 221-residue stretch at 269 to 489 (DKPSGPWRDC…KVVMMIRPNP (221 aa)) folds into the Fibrinogen C-terminal domain. 2 disulfides stabilise this stretch: Cys-278/Cys-307 and Cys-430/Cys-443.

Widely expressed in heart, tongue, lung and skeletal muscle. Also found in lower levels in kidney, epididymis and testis.

Its subcellular location is the secreted. In terms of biological role, induces sprouting in endothelial cells through an autocrine and paracrine action. This is Angiopoietin-related protein 2 (Angptl2) from Mus musculus (Mouse).